Here is a 490-residue protein sequence, read N- to C-terminus: GTPase Der (490 aa).

2 EngA-type G domains span residues 3 to 166 and 203 to 376; these read PVVA…MDDV and IKLA…DSST. Residues 9–16, 56–60, 118–121, 209–216, 256–260, and 321–324 contribute to the GTP site; these read GRPNVGKS, DTGGI, NKTD, DTAGV, and NKWD. The region spanning 377–461 is the KH-like domain; that stretch reads RRVSTAMLTR…PIRIQFKEGE (85 aa).

It belongs to the TRAFAC class TrmE-Era-EngA-EngB-Septin-like GTPase superfamily. EngA (Der) GTPase family. As to quaternary structure, associates with the 50S ribosomal subunit.

In terms of biological role, GTPase that plays an essential role in the late steps of ribosome biogenesis. The polypeptide is GTPase Der (Citrobacter koseri (strain ATCC BAA-895 / CDC 4225-83 / SGSC4696)).